The chain runs to 260 residues: Late transcription factor 1 (260 aa).

This sequence belongs to the chordopoxvirinae VLTF-1 family. In terms of assembly, interacts with the late transcription factors VLTF-2 and VLTF-3. Interacts with the late transcription elongation factor VLTF-4. Interacts with itself.

Functionally, associates with RNA polymerase to initiate transcription from late gene promoters. The sequence is that of Late transcription factor 1 (OPG093) from Homo sapiens (Human).